Here is a 478-residue protein sequence, read N- to C-terminus: 9-divinyl ether synthase (478 aa).

Heme is bound at residue C431.

It belongs to the cytochrome P450 family. 9-divinyl ether synthase subfamily.

The enzyme catalyses (9S)-hydroperoxy-(10E,12Z)-octadecadienoate = colneleate + H2O. Involved in the biosynthesis of the anti-fungal toxins colneleic acid and colnelenic acid. In Capsicum annuum (Capsicum pepper), this protein is 9-divinyl ether synthase (DES).